We begin with the raw amino-acid sequence, 261 residues long: Glucose 1-dehydrogenase 4 (261 aa).

11–35 (VITGGSTGLGRAMAVRFGQEEAKVV) provides a ligand contact to NAD(+). Substrate is bound at residue S145. The Proton acceptor role is filled by Y158.

The protein belongs to the short-chain dehydrogenases/reductases (SDR) family. As to quaternary structure, homotetramer.

It catalyses the reaction D-glucose + NAD(+) = D-glucono-1,5-lactone + NADH + H(+). The catalysed reaction is D-glucose + NADP(+) = D-glucono-1,5-lactone + NADPH + H(+). The chain is Glucose 1-dehydrogenase 4 (gdhIV) from Priestia megaterium (Bacillus megaterium).